A 323-amino-acid polypeptide reads, in one-letter code: Breast cancer metastasis-suppressor 1-like protein (323 aa).

Basic and acidic residues predominate over residues 1–17; sequence MPVHSRGDKKETNHHDE. Residues 1-56 are disordered; that stretch reads MPVHSRGDKKETNHHDEMEVDYAENEGSSSEDEDTESSSVSEDGDSSEMDDEDCER. Acidic residues predominate over residues 18–53; it reads MEVDYAENEGSSSEDEDTESSSVSEDGDSSEMDDED. Coiled-coil stretches lie at residues 52-84 and 149-180; these read EDCE…KERL and EKLL…ITSE. Serine 197 carries the post-translational modification Phosphoserine. Residues lysine 240 and lysine 246 each participate in a glycyl lysine isopeptide (Lys-Gly) (interchain with G-Cter in SUMO2) cross-link.

Belongs to the BRMS1 family. Component of the Sin3/HDAC1 corepressor complex at least composed of BRMS1, BRMS1L and ING2/ING1L. Interacts with HDAC and SIN3A.

It is found in the nucleus. Functionally, involved in the histone deacetylase (HDAC1)-dependent transcriptional repression activity. When overexpressed in lung cancer cell line that lacks p53/TP53 expression, inhibits cell growth. The protein is Breast cancer metastasis-suppressor 1-like protein (BRMS1L) of Bos taurus (Bovine).